The following is a 762-amino-acid chain: Subtilisin-like protease SBT3.11 (762 aa).

A signal peptide spans 1 to 16 (MMSSIVSWWFFWVISA). Positions 17 to 116 (VCILKVEFNI…VTPNTFYELQ (100 aa)) are cleaved as a propeptide — activation peptide. Positions 37 to 115 (VHIVYLGEKE…QVTPNTFYEL (79 aa)) constitute an Inhibitor I9 domain. The Peptidase S8 domain occupies 120-609 (TFDYLGLSHS…GGLVNPNKAA (490 aa)). Catalysis depends on aspartate 150, which acts as the Charge relay system. N-linked (GlcNAc...) asparagine glycosylation occurs at asparagine 206. Residue histidine 226 is the Charge relay system of the active site. Residues asparagine 241 and asparagine 371 are each glycosylated (N-linked (GlcNAc...) asparagine). Serine 540 serves as the catalytic Charge relay system.

This sequence belongs to the peptidase S8 family.

The protein resides in the secreted. This chain is Subtilisin-like protease SBT3.11, found in Arabidopsis thaliana (Mouse-ear cress).